A 199-amino-acid polypeptide reads, in one-letter code: Hematopoietic prostaglandin D synthase (199 aa).

The GST N-terminal domain maps to 2–79 (PNYKLTYFNL…YLARESGLAG (78 aa)). Glutathione is bound by residues tyrosine 8, arginine 14, tryptophan 39, 49 to 51 (GKV), and 63 to 64 (QS). Residues 81–199 (TPVEQALADA…WIQKRPKTAI (119 aa)) enclose the GST C-terminal domain.

It belongs to the GST superfamily. Sigma family. It depends on glutathione as a cofactor. Highly expressed in liver, kidney, small intestine and colon, moderately in pancreas, bone marrow, lung and ovary, and expressed at low levels in spleen, thymus, heart and brain. Not detected in oviduct or skin (at protein level). Expressed in liver.

The protein resides in the cytoplasm. The enzyme catalyses prostaglandin H2 = prostaglandin D2. It catalyses the reaction RX + glutathione = an S-substituted glutathione + a halide anion + H(+). It carries out the reaction 2-glyceryl-prostaglandin H2 = 2-glyceryl-prostaglandin D2. Bifunctional enzyme which catalyzes both the conversion of PGH2 to PGD2, a prostaglandin involved in smooth muscle contraction/relaxation and a potent inhibitor of platelet aggregation, and the conjugation of glutathione with a wide range of aryl halides, organic isothiocyanates and alpha,beta-unsaturated carbonyls. Also exhibits low glutathione-peroxidase activity towards cumene hydroperoxide and t-butyl hydroperoxide. The chain is Hematopoietic prostaglandin D synthase (HPGDS) from Gallus gallus (Chicken).